We begin with the raw amino-acid sequence, 548 residues long: Chaperonin GroEL (548 aa).

ATP-binding positions include 30-33 (TLGP), Lys51, 87-91 (DGTTT), Gly415, 479-481 (NAA), and Asp495.

The protein belongs to the chaperonin (HSP60) family. As to quaternary structure, forms a cylinder of 14 subunits composed of two heptameric rings stacked back-to-back. Interacts with the co-chaperonin GroES.

The protein localises to the cytoplasm. The catalysed reaction is ATP + H2O + a folded polypeptide = ADP + phosphate + an unfolded polypeptide.. Together with its co-chaperonin GroES, plays an essential role in assisting protein folding. The GroEL-GroES system forms a nano-cage that allows encapsulation of the non-native substrate proteins and provides a physical environment optimized to promote and accelerate protein folding. This chain is Chaperonin GroEL, found in Aliivibrio fischeri (strain MJ11) (Vibrio fischeri).